Consider the following 81-residue polypeptide: ATP synthase subunit c, chloroplastic (81 aa).

The next 2 membrane-spanning stretches (helical) occupy residues 3–23 (PLIAAASVIAAGLAVGLASIG) and 57–77 (LAFMEALTIYGLVVALALLFA).

The protein belongs to the ATPase C chain family. As to quaternary structure, F-type ATPases have 2 components, F(1) - the catalytic core - and F(0) - the membrane proton channel. F(1) has five subunits: alpha(3), beta(3), gamma(1), delta(1), epsilon(1). F(0) has four main subunits: a(1), b(1), b'(1) and c(10-14). The alpha and beta chains form an alternating ring which encloses part of the gamma chain. F(1) is attached to F(0) by a central stalk formed by the gamma and epsilon chains, while a peripheral stalk is formed by the delta, b and b' chains.

It is found in the plastid. The protein localises to the chloroplast thylakoid membrane. In terms of biological role, f(1)F(0) ATP synthase produces ATP from ADP in the presence of a proton or sodium gradient. F-type ATPases consist of two structural domains, F(1) containing the extramembraneous catalytic core and F(0) containing the membrane proton channel, linked together by a central stalk and a peripheral stalk. During catalysis, ATP synthesis in the catalytic domain of F(1) is coupled via a rotary mechanism of the central stalk subunits to proton translocation. Functionally, key component of the F(0) channel; it plays a direct role in translocation across the membrane. A homomeric c-ring of between 10-14 subunits forms the central stalk rotor element with the F(1) delta and epsilon subunits. This is ATP synthase subunit c, chloroplastic from Agrostis stolonifera (Creeping bentgrass).